Consider the following 75-residue polypeptide: Large ribosomal subunit protein uL29 (75 aa).

This sequence belongs to the universal ribosomal protein uL29 family.

The polypeptide is Large ribosomal subunit protein uL29 (Ureaplasma urealyticum serovar 10 (strain ATCC 33699 / Western)).